Here is a 450-residue protein sequence, read N- to C-terminus: Trehalose/maltose-binding protein MalE (450 aa).

Residues 1–24 form the signal peptide; the sequence is MNVKKVLLGLFLVGVLGIAVVASG. Residues glutamate 57, threonine 84, arginine 89, aspartate 110, tyrosine 161, aspartate 163, tyrosine 217, glutamate 279, tryptophan 297, tyrosine 299, glycine 334, tryptophan 335, tryptophan 371, and arginine 404 each coordinate alpha,alpha-trehalose.

This sequence belongs to the bacterial solute-binding protein 1 family. In terms of assembly, the complex is composed of two ATP-binding proteins (MalK), two transmembrane proteins (MalG and MalF) and a solute-binding protein (MalE). Glycosylated.

It localises to the cell membrane. Part of the ABC transporter complex MalEFGK involved in trehalose/maltose import. Binds maltose and trehalose. The sequence is that of Trehalose/maltose-binding protein MalE (malE) from Thermococcus litoralis (strain ATCC 51850 / DSM 5473 / JCM 8560 / NS-C).